Consider the following 128-residue polypeptide: Ribonuclease P protein component (128 aa).

Belongs to the RnpA family. In terms of assembly, consists of a catalytic RNA component (M1 or rnpB) and a protein subunit.

It carries out the reaction Endonucleolytic cleavage of RNA, removing 5'-extranucleotides from tRNA precursor.. RNaseP catalyzes the removal of the 5'-leader sequence from pre-tRNA to produce the mature 5'-terminus. It can also cleave other RNA substrates such as 4.5S RNA. The protein component plays an auxiliary but essential role in vivo by binding to the 5'-leader sequence and broadening the substrate specificity of the ribozyme. This Prochlorococcus marinus (strain NATL2A) protein is Ribonuclease P protein component.